Here is a 104-residue protein sequence, read N- to C-terminus: ATP-dependent Clp protease adapter protein ClpS (104 aa).

A disordered region spans residues 1 to 20; that stretch reads MSPDPHEDLGDVLTEPTQKT.

The protein belongs to the ClpS family. In terms of assembly, binds to the N-terminal domain of the chaperone ClpA.

In terms of biological role, involved in the modulation of the specificity of the ClpAP-mediated ATP-dependent protein degradation. This is ATP-dependent Clp protease adapter protein ClpS from Desulfatibacillum aliphaticivorans.